Consider the following 70-residue polypeptide: Large ribosomal subunit protein bL31 (70 aa).

4 residues coordinate Zn(2+): Cys-16, Cys-18, Cys-37, and Cys-40.

This sequence belongs to the bacterial ribosomal protein bL31 family. Type A subfamily. In terms of assembly, part of the 50S ribosomal subunit. Zn(2+) is required as a cofactor.

Functionally, binds the 23S rRNA. The polypeptide is Large ribosomal subunit protein bL31 (Colwellia psychrerythraea (strain 34H / ATCC BAA-681) (Vibrio psychroerythus)).